Reading from the N-terminus, the 151-residue chain is Small ribosomal subunit protein uS11 (151 aa).

Residues 130–151 are disordered; the sequence is EDVTPIPSDSTRRKGGRRGRRL. The segment covering 142 to 151 has biased composition (basic residues); that stretch reads RKGGRRGRRL.

Belongs to the universal ribosomal protein uS11 family.

The polypeptide is Small ribosomal subunit protein uS11 (Aedes aegypti (Yellowfever mosquito)).